The chain runs to 365 residues: Probable secreted beta-glucosidase UTH1 (365 aa).

The first 17 residues, Met-1 to Ala-17, serve as a signal peptide directing secretion.

Belongs to the SUN family.

It is found in the mitochondrion outer membrane. The protein resides in the secreted. The protein localises to the cell wall. Involved in aging, oxidative stress response, and in the regulation of mitochondrial biogenesis. Inactivation of UTH1 increases life span, leads to higher resistance to heat stress and against hydrogen peroxide, and increases sensitivity to the superoxide radical-generating drug paraquat and to copper. Also required for the selective autophagic degradation of mitochondria (mitophagy) in response to nitrogen starvation. Involved in the remodeling of the cell wall during the various phases of yeast culture development and under various environmental conditions and plays a role in septation. Involved in cell sensitivity to boric acid. The chain is Probable secreted beta-glucosidase UTH1 (UTH1) from Saccharomyces cerevisiae (strain ATCC 204508 / S288c) (Baker's yeast).